A 166-amino-acid polypeptide reads, in one-letter code: Lipoprotein signal peptidase (166 aa).

The next 4 helical transmembrane spans lie at 9 to 29, 45 to 65, 71 to 91, and 100 to 120; these read ASGA…FDQL, ALTS…FGFL, WQRW…CFLL, and FSLS…DRLV. Residues aspartate 126 and aspartate 144 contribute to the active site. Residues 135–155 traverse the membrane as a helical segment; the sequence is WHFPAFNLADSAITVGAVLLV.

Belongs to the peptidase A8 family.

Its subcellular location is the cell inner membrane. The catalysed reaction is Release of signal peptides from bacterial membrane prolipoproteins. Hydrolyzes -Xaa-Yaa-Zaa-|-(S,diacylglyceryl)Cys-, in which Xaa is hydrophobic (preferably Leu), and Yaa (Ala or Ser) and Zaa (Gly or Ala) have small, neutral side chains.. It functions in the pathway protein modification; lipoprotein biosynthesis (signal peptide cleavage). In terms of biological role, this protein specifically catalyzes the removal of signal peptides from prolipoproteins. The polypeptide is Lipoprotein signal peptidase (Burkholderia ambifaria (strain MC40-6)).